The sequence spans 313 residues: Porphobilinogen deaminase (313 aa).

Cys242 carries the post-translational modification S-(dipyrrolylmethanemethyl)cysteine.

The protein belongs to the HMBS family. As to quaternary structure, monomer. Requires dipyrromethane as cofactor.

It carries out the reaction 4 porphobilinogen + H2O = hydroxymethylbilane + 4 NH4(+). The protein operates within porphyrin-containing compound metabolism; protoporphyrin-IX biosynthesis; coproporphyrinogen-III from 5-aminolevulinate: step 2/4. Tetrapolymerization of the monopyrrole PBG into the hydroxymethylbilane pre-uroporphyrinogen in several discrete steps. This chain is Porphobilinogen deaminase, found in Pseudomonas fluorescens (strain SBW25).